The primary structure comprises 427 residues: Serine hydroxymethyltransferase (427 aa).

(6S)-5,6,7,8-tetrahydrofolate-binding positions include leucine 122 and 126-128 (GHL). Position 231 is an N6-(pyridoxal phosphate)lysine (lysine 231). Residues glutamate 247 and 355–357 (SPF) each bind (6S)-5,6,7,8-tetrahydrofolate.

This sequence belongs to the SHMT family. Homodimer. The cofactor is pyridoxal 5'-phosphate.

The protein localises to the cytoplasm. The enzyme catalyses (6R)-5,10-methylene-5,6,7,8-tetrahydrofolate + glycine + H2O = (6S)-5,6,7,8-tetrahydrofolate + L-serine. The protein operates within one-carbon metabolism; tetrahydrofolate interconversion. Its pathway is amino-acid biosynthesis; glycine biosynthesis; glycine from L-serine: step 1/1. Its function is as follows. Catalyzes the reversible interconversion of serine and glycine with tetrahydrofolate (THF) serving as the one-carbon carrier. This reaction serves as the major source of one-carbon groups required for the biosynthesis of purines, thymidylate, methionine, and other important biomolecules. Also exhibits THF-independent aldolase activity toward beta-hydroxyamino acids, producing glycine and aldehydes, via a retro-aldol mechanism. This is Serine hydroxymethyltransferase from Synechocystis sp. (strain ATCC 27184 / PCC 6803 / Kazusa).